An 83-amino-acid chain; its full sequence is RNA-binding protein Hfq (83 aa).

Residues 10 to 70 (DAFLNQVRKE…ISTVSPLKPV (61 aa)) form the Sm domain.

Belongs to the Hfq family. In terms of assembly, homohexamer.

In terms of biological role, RNA chaperone that binds small regulatory RNA (sRNAs) and mRNAs to facilitate mRNA translational regulation in response to envelope stress, environmental stress and changes in metabolite concentrations. Also binds with high specificity to tRNAs. The protein is RNA-binding protein Hfq of Pelotomaculum thermopropionicum (strain DSM 13744 / JCM 10971 / SI).